The sequence spans 204 residues: UPF0637 protein USA300HOU_1046.1 (204 aa).

This sequence belongs to the UPF0637 family.

The protein is UPF0637 protein USA300HOU_1046.1 of Staphylococcus aureus (strain USA300 / TCH1516).